A 234-amino-acid polypeptide reads, in one-letter code: Large ribosomal subunit protein uL1 (234 aa).

The protein belongs to the universal ribosomal protein uL1 family. In terms of assembly, part of the 50S ribosomal subunit.

Its function is as follows. Binds directly to 23S rRNA. The L1 stalk is quite mobile in the ribosome, and is involved in E site tRNA release. In terms of biological role, protein L1 is also a translational repressor protein, it controls the translation of the L11 operon by binding to its mRNA. The protein is Large ribosomal subunit protein uL1 of Baumannia cicadellinicola subsp. Homalodisca coagulata.